The sequence spans 170 residues: MPNAVGRFGRLSWLWLSLLVLVIDQASKFYFEGKLEMFQQIVVIPDLFSWTLAYNTGAAFSFLADSSGWQRWLFALIAIAVSAVLVVWLKRLGRNETWLAIALALVLGGALGNLYDRIALGHVIDFILVHWQNRWYFPAFNFADSAITVGAVMLALDMFKSKKTGEAVHD.

4 consecutive transmembrane segments (helical) span residues Leu11 to Phe31, Ile41 to Ser61, Trp69 to Leu89, and Asn95 to Tyr115. Residues Asp125 and Asp144 contribute to the active site. Residues Tyr136 to Leu156 traverse the membrane as a helical segment.

The protein belongs to the peptidase A8 family.

The protein resides in the cell inner membrane. The catalysed reaction is Release of signal peptides from bacterial membrane prolipoproteins. Hydrolyzes -Xaa-Yaa-Zaa-|-(S,diacylglyceryl)Cys-, in which Xaa is hydrophobic (preferably Leu), and Yaa (Ala or Ser) and Zaa (Gly or Ala) have small, neutral side chains.. It participates in protein modification; lipoprotein biosynthesis (signal peptide cleavage). Functionally, this protein specifically catalyzes the removal of signal peptides from prolipoproteins. This is Lipoprotein signal peptidase from Pseudomonas fluorescens (strain Pf0-1).